Consider the following 994-residue polypeptide: Chloride channel protein 1 (994 aa).

Residues 1 to 118 (MERSQSQRHG…VLRRKLGEDW (118 aa)) are Cytoplasmic-facing. Residues 119–150 (IFLVLLGLLMALVSWCMDYVSAKSLQAYKWTY) form a helical membrane-spanning segment. At 151–158 (AQMKPSLP) the chain is on the extracellular side. Residues 159–179 (LQYLAWVTFPLILILFSALFC) form a helical membrane-spanning segment. Over 180–183 (QLIS) the chain is Cytoplasmic. Residues 184–189 (PQAVGS) constitute an intramembrane region (note=Loop between two helices). Residues 188–192 (GSGIP) carry the Selectivity filter part_1 motif. Serine 189 contributes to the chloride binding site. The helical intramembrane region spans 190–195 (GIPEMK). Topologically, residues 196–208 (TILRGVVLKEYLT) are cytoplasmic. Positions 209 to 224 (LKAFVAKVVALTAGLG) form an intramembrane region, helical. Residues 225-230 (SGIPVG) constitute an intramembrane region (note=Loop between two helices). The Selectivity filter part_2 motif lies at 230–234 (GKEGP). An intramembrane region (helical) is located at residues 231–246 (KEGPFVHIASICAAVL). The Cytoplasmic portion of the chain corresponds to 247–268 (SKFMSMFSGVYEQPYYYTDILT). 2 consecutive intramembrane regions (helical) follow at residues 269-280 (VGCAVGVGCCFG) and 281-290 (TPLGGVLFSI). Over 291–301 (EVTSTYFAVRN) the chain is Cytoplasmic. A helical transmembrane segment spans residues 302–321 (YWRGFFAATFSAFVFRVLAV). Over 322–347 (WNKDAVTITALFRTNFRMDFPFDLKE) the chain is Extracellular. Residues 348–376 (LPAFAVIGICCGFLGAVFVYLHRQVMLGV) traverse the membrane as a helical segment. The Cytoplasmic segment spans residues 377–390 (RKHKCLSQFLAKHR). The chain crosses the membrane as a helical span at residues 391–408 (LLYPGIVTFVIASLTFPP). The Extracellular segment spans residues 409–414 (GMGQFM). The note=Loop between two helices intramembrane region spans 415 to 418 (AGEL). The helical intramembrane region spans 419–426 (MPREAIST). Residues 427 to 457 (LFDNNTWVKHIGDPQSLGQSAVWLHPQVNVI) are Extracellular-facing. The helical intramembrane region spans 458 to 475 (IIILLFFVMKFWMSIVAT). The segment at residues 476 to 482 (TMPIPCG) is an intramembrane region (note=Loop between two helices). Residues 482–486 (GGFMP) carry the Selectivity filter part_3 motif. The helical intramembrane region spans 483–498 (GFMPVFVLGAAFGRLV). Residue phenylalanine 484 coordinates chloride. Residues 499–521 (GEIMAMLFPEGILFDDIIYKILP) are Extracellular-facing. The helical intramembrane region spans 522-538 (GGYAVIGAAALTGAVSH). Residues 539–540 (TV) constitute an intramembrane region (note=Loop between two helices). Residues 541 to 554 (STAVICFELTGQIA) constitute an intramembrane region (helical). At 555-557 (HIL) the chain is on the extracellular side. An intramembrane region (helical) is located at residues 558–571 (PMMVAVILANMVAQ). The segment at residues 572-575 (SLQP) is an intramembrane region (note=Loop between two helices). Residues 576–578 (SLY) constitute an intramembrane region (helical). Tyrosine 578 is a chloride binding site. At 579 to 994 (DSIIQVKKLP…DEEDEDELIL (416 aa)) the chain is on the cytoplasmic side. The CBS 1 domain maps to 609-668 (MVRDVKFVSASCTYGELRNLLQATTVKTLPLVDSKDSMILLGSVERSELQSLLQRHLCAE). The segment at 710 to 770 (EDEDEDLSRK…PEASDSADQR (61 aa)) is disordered. A compositionally biased stretch (pro residues) spans 725–739 (TPAPPPPSPPPPPSQ). Residues 827–882 (IDQSPFQLVEQTTLHKTHTLFSLLGLHLAYVTSMGKLRGVLALEELQKAIEGHTKS) enclose the CBS 2 domain. 2 disordered regions span residues 886–954 (LRPP…ARAE) and 971–994 (ELADILHGPSLRSTDEEDEDELIL). Phosphoserine is present on serine 892. The segment covering 933–943 (PETPVPPPSPE) has biased composition (pro residues). The segment covering 985 to 994 (DEEDEDELIL) has biased composition (acidic residues).

The protein belongs to the chloride channel (TC 2.A.49) family. ClC-1/CLCN1 subfamily. In terms of assembly, homodimer. In terms of tissue distribution, predominantly expressed in skeletal muscles.

It localises to the cell membrane. The protein localises to the sarcolemma. It is found in the T-tubule. It carries out the reaction chloride(in) = chloride(out). The enzyme catalyses thiocyanate(in) = thiocyanate(out). It catalyses the reaction bromide(in) = bromide(out). The catalysed reaction is nitrate(in) = nitrate(out). It carries out the reaction iodide(out) = iodide(in). Modulated by membrane voltage with depolarization favouring channel opening and hyperpolarization favouring channel closure. Inhibited by acidic pH and ATP binding due to a shift of voltage dependence of common gating to more positive voltages. Inhibited by 9-anthracene-carboxylic. Functionally, voltage-gated chloride channel involved in skeletal muscle excitability. Generates most of the plasma membrane chloride conductance in skeletal muscle fibers, stabilizes the resting membrane potential and contributes to the repolarization phase during action potential firing. Forms a homodimeric channel where each subunit has its own ion conduction pathway. Conducts double-barreled currents controlled by two types of gates, two fast glutamate gates that control each subunit independently and a slow common gate that opens and shuts off both subunits simultaneously. Has a significant open probability at muscle resting potential and is further activated upon membrane depolarization. Permeable to small monovalent anions with ion selectivity for chloride &gt; thiocyanate &gt; bromide &gt; nitrate &gt; iodide. This Mus musculus (Mouse) protein is Chloride channel protein 1 (Clcn1).